The sequence spans 546 residues: Probable zinc metalloprotease EGY2, chloroplastic (546 aa).

The transit peptide at 1–64 (MQLPAMSCSP…QIRNRRFVCQ (64 aa)) directs the protein to the chloroplast. Positions 67 to 143 (TETEPDGDGN…DATPASDAQE (77 aa)) are disordered. A compositionally biased stretch (acidic residues) spans 69-86 (TEPDGDGNGDEEKEELGD). 2 stretches are compositionally biased toward polar residues: residues 89 to 110 (SSPS…TNAD) and 118 to 130 (NTEP…TVQN). Transmembrane regions (helical) follow at residues 257 to 277 (AVPE…TLLL), 301 to 321 (VYGA…HILA), 326 to 346 (GIKL…FGAI), 364 to 384 (AAGP…GFIL), 427 to 447 (PLVL…IPAG), 474 to 494 (LLGI…LIFF), and 514 to 534 (YISI…PYPF).

This sequence belongs to the peptidase M50B family.

The protein resides in the plastid. The protein localises to the chloroplast membrane. In terms of biological role, probable membrane-associated metalloprotease that may be involved in chloroplast development. The chain is Probable zinc metalloprotease EGY2, chloroplastic (EGY2) from Oryza sativa subsp. japonica (Rice).